Here is a 407-residue protein sequence, read N- to C-terminus: Glucan 1,3-beta-glucosidase 1 (407 aa).

An N-terminal signal peptide occupies residues 1-22; it reads MLSFTSVFSFFLHALLLKTAFS. The active-site Proton donor is Glu213. The cysteines at positions 295 and 406 are disulfide-linked. Glu312 (nucleophile) is an active-site residue.

Belongs to the glycosyl hydrolase 5 (cellulase A) family.

Its subcellular location is the secreted. It catalyses the reaction Successive hydrolysis of beta-D-glucose units from the non-reducing ends of (1-&gt;3)-beta-D-glucans, releasing alpha-glucose.. Functionally, beta-glucanases participate in the metabolism of beta-glucan, the main structural component of the cell wall. It could also function biosynthetically as a transglycosylase. The protein is Glucan 1,3-beta-glucosidase 1 (exg1) of Schizosaccharomyces pombe (strain 972 / ATCC 24843) (Fission yeast).